A 346-amino-acid polypeptide reads, in one-letter code: fMet-Leu-Phe receptor (346 aa).

N-linked (GlcNAc...) asparagine glycans are attached at residues Asn-1 and Asn-7. The Extracellular segment spans residues 1 to 24 (NSSLPTNISGGTPAVSAGYLFLDI). Residues 25-47 (ITYLVYAVTFVLGVLGNGLVIWV) form a helical membrane-spanning segment. Residues 48 to 58 (AGFRMTHTVTT) lie on the Cytoplasmic side of the membrane. The chain crosses the membrane as a helical span at residues 59–80 (ISYLNLAVADFCFTSTLPFFMV). Residues 81 to 97 (RKAMGGHWPFGWFLCKF) are Extracellular-facing. A disulfide bridge links Cys-95 with Cys-173. Residues 98–118 (IFTIVDINLFGSVFLIALIAL) traverse the membrane as a helical segment. At 119-137 (DRCVCVLHPVWTQNHRTVS) the chain is on the cytoplasmic side. A helical membrane pass occupies residues 138 to 159 (LAKKVIIGPWVMALLLTLPVII). The Extracellular segment spans residues 160 to 202 (RVTTVPGKMGTVSCTFNFSPWTNDPKERIKVAIAMLTVRGIIR). Residues 203–223 (FIIGFSAPMSIVAVSYGLIAT) form a helical membrane-spanning segment. The Cytoplasmic portion of the chain corresponds to 224 to 239 (KIHKQGLIKSSRPLRV). The chain crosses the membrane as a helical span at residues 240–263 (LSFVAAAFFLCWSPYQVVAFIATV). Residues 264-282 (RIRELLQGMYKEISIAVDV) lie on the Extracellular side of the membrane. Residues 283 to 302 (TSALAFFNSCLNPMLYVFMG) form a helical membrane-spanning segment. Residues 303-346 (QDFRERLIHSLPASLERALTEASTQTSDTATNSTLPSAEVALQA) lie on the Cytoplasmic side of the membrane. Positions 324–338 (ASTQTSDTATNSTLP) are enriched in polar residues. A disordered region spans residues 324–346 (ASTQTSDTATNSTLPSAEVALQA).

This sequence belongs to the G-protein coupled receptor 1 family. Post-translationally, phosphorylated; which is necessary for desensitization.

It localises to the cell membrane. High affinity receptor for N-formyl-methionyl peptides (fMLP), which are powerful neutrophil chemotactic factors. Binding of fMLP to the receptor stimulates intracellular calcium mobilization and superoxide anion release. This response is mediated via a G-protein that activates a phosphatidylinositol-calcium second messenger system. Receptor for TAFA4, mediates its effects on chemoattracting macrophages, promoting phagocytosis and increasing ROS release. Receptor for cathepsin CTSG, leading to increased phagocyte chemotaxis. This is fMet-Leu-Phe receptor (FPR1) from Pongo pygmaeus (Bornean orangutan).